Reading from the N-terminus, the 387-residue chain is Alanine racemase (387 aa).

The active-site Proton acceptor; specific for D-alanine is the Lys38. Lys38 is subject to N6-(pyridoxal phosphate)lysine. Arg136 is a binding site for substrate. The Proton acceptor; specific for L-alanine role is filled by Tyr267. Met316 is a substrate binding site.

This sequence belongs to the alanine racemase family. Pyridoxal 5'-phosphate is required as a cofactor.

The enzyme catalyses L-alanine = D-alanine. The protein operates within amino-acid biosynthesis; D-alanine biosynthesis; D-alanine from L-alanine: step 1/1. Its function is as follows. Catalyzes the interconversion of L-alanine and D-alanine. May also act on other amino acids. This is Alanine racemase (alr) from Clostridium tetani (strain Massachusetts / E88).